We begin with the raw amino-acid sequence, 247 residues long: PABIR family member 2 (247 aa).

Residues Met1–Ser23 are disordered. Ala2 is modified (N-acetylalanine). Phosphoserine is present on residues Ser25, Ser33, Ser50, Ser58, and Leu63. The interval Ile82–Tyr104 is disordered. Residues Ser83–Asp94 show a composition bias toward low complexity. The residue at position 112 (Thr112) is a Phosphothreonine. 2 positions are modified to phosphoserine: Ser115 and Ser119. Arg122 is subject to Omega-N-methylarginine. Disordered regions lie at residues Val129–Pro152, Pro158–Lys177, and Asp202–Ala230. Phosphoserine is present on residues Ser137 and Ser141. Residues Arg166–Pro176 are compositionally biased toward basic and acidic residues. Residues Asp202–Asp216 are compositionally biased toward low complexity.

It belongs to the FAM122 family. In terms of processing, isoform 3 and isoform 4 are phosphorylated on Ser-62 and Ser-64.

In Homo sapiens (Human), this protein is PABIR family member 2.